Here is a 118-residue protein sequence, read N- to C-terminus: Large ribosomal subunit protein bL20 (118 aa).

This sequence belongs to the bacterial ribosomal protein bL20 family.

In terms of biological role, binds directly to 23S ribosomal RNA and is necessary for the in vitro assembly process of the 50S ribosomal subunit. It is not involved in the protein synthesizing functions of that subunit. The protein is Large ribosomal subunit protein bL20 of Marinomonas sp. (strain MWYL1).